A 349-amino-acid polypeptide reads, in one-letter code: tRNA pseudouridine synthase D (349 aa).

Phe-27 contributes to the substrate binding site. Residue Asp-80 is the Nucleophile of the active site. Asn-129 lines the substrate pocket. Residues 155–303 (GVPNYFGAQR…VEAARRAMLL (149 aa)) enclose the TRUD domain. Phe-329 is a binding site for substrate.

The protein belongs to the pseudouridine synthase TruD family.

The catalysed reaction is uridine(13) in tRNA = pseudouridine(13) in tRNA. Its function is as follows. Responsible for synthesis of pseudouridine from uracil-13 in transfer RNAs. The chain is tRNA pseudouridine synthase D from Citrobacter koseri (strain ATCC BAA-895 / CDC 4225-83 / SGSC4696).